The following is a 240-amino-acid chain: ATP synthase subunit a 1 (240 aa).

Transmembrane regions (helical) follow at residues 23-43 (GQVL…SVLA), 82-102 (VPFI…GALF), 120-140 (DINT…YAGF), 186-206 (LVVA…VMLL), and 207-227 (GLFT…AYIH).

Belongs to the ATPase A chain family. As to quaternary structure, F-type ATPases have 2 components, CF(1) - the catalytic core - and CF(0) - the membrane proton channel. CF(1) has five subunits: alpha(3), beta(3), gamma(1), delta(1), epsilon(1). CF(0) has four main subunits: a, b, b' and c.

It is found in the cellular thylakoid membrane. In terms of biological role, key component of the proton channel; it plays a direct role in the translocation of protons across the membrane. The polypeptide is ATP synthase subunit a 1 (Acaryochloris marina (strain MBIC 11017)).